The primary structure comprises 516 residues: Glycosyltransferase-like protein gnt15 (516 aa).

Residues 1–24 (MSNFYNNNPRRNTFRLTERIKKKP) lie on the Cytoplasmic side of the membrane. Residues 25–45 (YQTLIVFILIFLFLYVFGPFG) traverse the membrane as a helical; Signal-anchor for type II membrane protein segment. The Extracellular portion of the chain corresponds to 46 to 516 (EKKSNNNNNN…NDNCLTREHW (471 aa)). A glycan (N-linked (GlcNAc...) asparagine) is linked at Asn152. The segment at 199-250 (DTSNNNNNNNNNNNNNNNNNNNNNNNNNNNNNNNENNDNDNGNNNNNNDNEK) is disordered. A compositionally biased stretch (low complexity) spans 202-246 (NNNNNNNNNNNNNNNNNNNNNNNNNNNNNNNENNDNDNGNNNNNN). N-linked (GlcNAc...) asparagine glycosylation is found at Asn386 and Asn412.

This sequence belongs to the glycosyltransferase 8 family. Highly divergent.

It localises to the membrane. Its function is as follows. May have a role in modulating cell adhesion and glycosylation. Essential for development. The chain is Glycosyltransferase-like protein gnt15 (gnt15) from Dictyostelium discoideum (Social amoeba).